The sequence spans 179 residues: Acireductone dioxygenase (179 aa).

Residues His88, His90, Glu94, and His133 each coordinate Fe(2+). Ni(2+) is bound by residues His88, His90, Glu94, and His133.

Belongs to the acireductone dioxygenase (ARD) family. In terms of assembly, monomer. Interacts with MMP14. Fe(2+) is required as a cofactor. It depends on Ni(2+) as a cofactor.

The protein localises to the cytoplasm. Its subcellular location is the nucleus. It is found in the cell membrane. It catalyses the reaction 1,2-dihydroxy-5-(methylsulfanyl)pent-1-en-3-one + O2 = 4-methylsulfanyl-2-oxobutanoate + formate + 2 H(+). It carries out the reaction 1,2-dihydroxy-5-(methylsulfanyl)pent-1-en-3-one + O2 = 3-(methylsulfanyl)propanoate + CO + formate + 2 H(+). It participates in amino-acid biosynthesis; L-methionine biosynthesis via salvage pathway; L-methionine from S-methyl-5-thio-alpha-D-ribose 1-phosphate: step 5/6. Catalyzes 2 different reactions between oxygen and the acireductone 1,2-dihydroxy-3-keto-5-methylthiopentene (DHK-MTPene) depending upon the metal bound in the active site. Fe-containing acireductone dioxygenase (Fe-ARD) produces formate and 2-keto-4-methylthiobutyrate (KMTB), the alpha-ketoacid precursor of methionine in the methionine recycle pathway. Ni-containing acireductone dioxygenase (Ni-ARD) produces methylthiopropionate, carbon monoxide and formate, and does not lie on the methionine recycle pathway. Also down-regulates cell migration mediated by MMP14. This Macaca mulatta (Rhesus macaque) protein is Acireductone dioxygenase.